A 235-amino-acid polypeptide reads, in one-letter code: 1-(5-phosphoribosyl)-5-[(5-phosphoribosylamino)methylideneamino] imidazole-4-carboxamide isomerase (235 aa).

The active-site Proton acceptor is aspartate 8. Aspartate 128 (proton donor) is an active-site residue.

Belongs to the HisA/HisF family.

The protein localises to the cytoplasm. It carries out the reaction 1-(5-phospho-beta-D-ribosyl)-5-[(5-phospho-beta-D-ribosylamino)methylideneamino]imidazole-4-carboxamide = 5-[(5-phospho-1-deoxy-D-ribulos-1-ylimino)methylamino]-1-(5-phospho-beta-D-ribosyl)imidazole-4-carboxamide. Its pathway is amino-acid biosynthesis; L-histidine biosynthesis; L-histidine from 5-phospho-alpha-D-ribose 1-diphosphate: step 4/9. This is 1-(5-phosphoribosyl)-5-[(5-phosphoribosylamino)methylideneamino] imidazole-4-carboxamide isomerase from Thermus thermophilus (strain ATCC 27634 / DSM 579 / HB8).